We begin with the raw amino-acid sequence, 497 residues long: NADH-ubiquinone oxidoreductase chain 4 (497 aa).

The next 14 helical transmembrane spans lie at 3–23, 42–62, 94–114, 122–142, 144–164, 178–198, 220–240, 250–270, 276–296, 313–333, 340–360, 374–394, 418–438, and 463–483; these read FLLY…LLII, LFFS…SDNI, ISLL…LISW, NSFI…FCVL, LVFF…LIGV, LFFY…VIYS, ILWA…PFHI, PTVG…YGLL, IFCD…LLGI, IAYA…TSNI, VFLM…IGCV, GLVS…LSNI, FAAL…IWLY, and VVGF…SYII.

It belongs to the complex I subunit 4 family.

It localises to the mitochondrion membrane. It catalyses the reaction a ubiquinone + NADH + 5 H(+)(in) = a ubiquinol + NAD(+) + 4 H(+)(out). Functionally, core subunit of the mitochondrial membrane respiratory chain NADH dehydrogenase (Complex I) that is believed to belong to the minimal assembly required for catalysis. Complex I functions in the transfer of electrons from NADH to the respiratory chain. The immediate electron acceptor for the enzyme is believed to be ubiquinone. This Acanthamoeba castellanii (Amoeba) protein is NADH-ubiquinone oxidoreductase chain 4 (ND4).